We begin with the raw amino-acid sequence, 174 residues long: Imidazole glycerol phosphate synthase subunit HisH (174 aa).

One can recognise a Glutamine amidotransferase type-1 domain in the interval 2–174; that stretch reads SVVIINTGCA…AAVNKDNFWR (173 aa). Catalysis depends on cysteine 77, which acts as the Nucleophile.

Heterodimer of HisH and HisF.

The protein localises to the cytoplasm. It catalyses the reaction 5-[(5-phospho-1-deoxy-D-ribulos-1-ylimino)methylamino]-1-(5-phospho-beta-D-ribosyl)imidazole-4-carboxamide + L-glutamine = D-erythro-1-(imidazol-4-yl)glycerol 3-phosphate + 5-amino-1-(5-phospho-beta-D-ribosyl)imidazole-4-carboxamide + L-glutamate + H(+). It carries out the reaction L-glutamine + H2O = L-glutamate + NH4(+). It participates in amino-acid biosynthesis; L-histidine biosynthesis; L-histidine from 5-phospho-alpha-D-ribose 1-diphosphate: step 5/9. Functionally, IGPS catalyzes the conversion of PRFAR and glutamine to IGP, AICAR and glutamate. The HisH subunit catalyzes the hydrolysis of glutamine to glutamate and ammonia as part of the synthesis of IGP and AICAR. The resulting ammonia molecule is channeled to the active site of HisF. The protein is Imidazole glycerol phosphate synthase subunit HisH (hisH) of Buchnera aphidicola subsp. Schlechtendalia chinensis.